The primary structure comprises 147 residues: Cyanate hydratase (147 aa).

Catalysis depends on residues arginine 88, glutamate 91, and serine 114.

It belongs to the cyanase family.

The enzyme catalyses cyanate + hydrogencarbonate + 3 H(+) = NH4(+) + 2 CO2. In terms of biological role, catalyzes the reaction of cyanate with bicarbonate to produce ammonia and carbon dioxide. This chain is Cyanate hydratase, found in Methylobacillus flagellatus (strain ATCC 51484 / DSM 6875 / VKM B-1610 / KT).